Here is a 126-residue protein sequence, read N- to C-terminus: Protein C10 (126 aa).

Alanine 2 carries the post-translational modification N-acetylalanine.

Belongs to the UPF0456 family. As to expression, ubiquitously expressed, with higher expression in lung and fetal brain.

The protein resides in the cytoplasm. In brain, may be required for corpus callosum development. The chain is Protein C10 (C12orf57) from Homo sapiens (Human).